Here is a 369-residue protein sequence, read N- to C-terminus: MANLEVNPQRYQEQLAEKTERLTEMFSEYNVPELEVYESPEQHYRMRAEFRVWHEGDDMYYVMFNQETKEKYRVDQFPAASRLINDLMPLLTDAMKDNHSLRHKLFQVDFLSTLSGEILVSLLYHRQLGEQWIQDAKALKQQLNDEGFNLNLIGRARKMKIVLDRDYVIEKLDVNGDSYIYQQVENSFTQPNGKVAEKMLEWAVDCTQDSKGDLLELYCGNGNFSLALAQNFERVLATELAKPSVESAQYNIAANKIENVQIIRMSAEDFTVAMEGKREFRRLQQANIDLKSYNCNTIFVDPPRSGMDVDTCKMVQGYERIMYISCNPETLKENLDILSETHDITRFALFDQFPYTHHMEAGVFLERKA.

Residues Q190, Y218, N223, E239, and D301 each coordinate S-adenosyl-L-methionine. The active-site Nucleophile is C326. E360 (proton acceptor) is an active-site residue.

The protein belongs to the class I-like SAM-binding methyltransferase superfamily. RNA M5U methyltransferase family. TrmA subfamily.

It carries out the reaction uridine(54) in tRNA + S-adenosyl-L-methionine = 5-methyluridine(54) in tRNA + S-adenosyl-L-homocysteine + H(+). The catalysed reaction is uridine(341) in tmRNA + S-adenosyl-L-methionine = 5-methyluridine(341) in tmRNA + S-adenosyl-L-homocysteine + H(+). Its function is as follows. Dual-specificity methyltransferase that catalyzes the formation of 5-methyluridine at position 54 (m5U54) in all tRNAs, and that of position 341 (m5U341) in tmRNA (transfer-mRNA). The sequence is that of tRNA/tmRNA (uracil-C(5))-methyltransferase from Vibrio atlanticus (strain LGP32) (Vibrio splendidus (strain Mel32)).